The chain runs to 552 residues: Non-structural protein NS1 (552 aa).

Belongs to the orbivirus non-structural protein NS1 family.

The protein is Non-structural protein NS1 (Segment-5) of Antilocapra americana (Pronghorn).